Here is a 406-residue protein sequence, read N- to C-terminus: 2-epi-valiolone synthase (406 aa).

Residues 1–21 are disordered; that stretch reads MPSTGSTPILAHDVKSPHRGS. NAD(+) is bound by residues 105–108, 137–141, 161–162, lysine 174, lysine 183, and 201–204; these read EPSK, GVLCD, TS, and CLAT. Zn(2+) contacts are provided by glutamate 216, histidine 287, and histidine 304.

The protein belongs to the sugar phosphate cyclases superfamily. EVS family. The cofactor is NAD(+). Co(2+) is required as a cofactor. Zn(2+) serves as cofactor.

It carries out the reaction D-sedoheptulose 7-phosphate = 2-epi-valiolone + phosphate. Catalyzes the conversion of sedoheptulose 7-phosphate to 2-epi-valiolone, which may serve as an alternative precursor for aminocyclitol biosynthesis. The chain is 2-epi-valiolone synthase from Stigmatella aurantiaca (strain DW4/3-1).